The chain runs to 108 residues: MAGSQAQWRPPRSCDIYCSELKHCKSLRNRFHEYYTYGRAPDCQQWKQDYQNCKDWEKNHSTQAKDSLQESERKRLADQRKFTPVWELRQKPPSDWHLPLNQGEPQDP.

Residues 58–108 are disordered; it reads KNHSTQAKDSLQESERKRLADQRKFTPVWELRQKPPSDWHLPLNQGEPQDP. Positions 67-81 are enriched in basic and acidic residues; the sequence is SLQESERKRLADQRK.

The protein belongs to the UPF0545 family. Post-translationally, rapidly degraded by proteolysis following neuronal stimulation, resulting in increased AMPA receptor clustering.

Its subcellular location is the synapse. It is found in the synaptic cleft. Negatively regulates long-term potentiation and modulates adult synaptic plasticity. The sequence is that of Synaptic plasticity regulator PANTS from Danio rerio (Zebrafish).